Here is a 259-residue protein sequence, read N- to C-terminus: Global transcriptional regulator CodY (259 aa).

A GAF domain region spans residues 1–155 (MTLLEKTRKI…GGTVVGMEIL (155 aa)). The segment at residues 203–222 (ASKIADRVGITRSVIVNALR) is a DNA-binding region (H-T-H motif).

Belongs to the CodY family.

It localises to the cytoplasm. DNA-binding global transcriptional regulator which is involved in the adaptive response to starvation and acts by directly or indirectly controlling the expression of numerous genes in response to nutrient availability. During rapid exponential growth, CodY is highly active and represses genes whose products allow adaptation to nutrient depletion. The sequence is that of Global transcriptional regulator CodY from Listeria monocytogenes serotype 4b (strain CLIP80459).